Here is a 517-residue protein sequence, read N- to C-terminus: General transcription factor IIF subunit 1 (517 aa).

The residue at position 2 (alanine 2) is an N-acetylalanine. At threonine 156 the chain carries Phosphothreonine. The interval 178-458 (QQRRLKDQDQ…SGDVQVTEDA (281 aa)) is disordered. The span at 210–225 (LEDDLEMSSDDSEASG) shows a compositional bias: acidic residues. Residues serine 217, serine 218, serine 221, and serine 224 each carry the phosphoserine modification. Residues 232–251 (PKAKKKAPPSKGGRKKKKKK) are compositionally biased toward basic residues. 2 stretches are compositionally biased toward acidic residues: residues 255–270 (DEAF…EGQE) and 303–325 (EQSE…EEEE). A Phosphothreonine modification is found at threonine 331. Positions 343–355 (EESDSSEESDIDS) are enriched in acidic residues. A compositionally biased stretch (basic residues) spans 364–374 (AKKKTPPKRER). Residues serine 377, serine 380, serine 381, and serine 385 each carry the phosphoserine modification. Over residues 377–391 (SGGSSRGNSRPGTPS) the composition is skewed to low complexity. Threonine 389 bears the Phosphothreonine mark. Serine 391 carries the phosphoserine modification. Over residues 392–401 (TEAGSTSSTL) the composition is skewed to polar residues. Lysine 407 is subject to N6-acetyllysine. Residues 428–452 (GPQSLSGKSTPQPQSGKSTPSSGDV) show a composition bias toward polar residues. A phosphoserine mark is found at serine 431, serine 433, and serine 436. A phosphothreonine mark is found at threonine 437 and threonine 446. The residue at position 449 (serine 449) is a Phosphoserine.

Belongs to the TFIIF alpha subunit family. As to quaternary structure, heterodimer of an alpha and a beta subunit. Interacts with GTF2F2, CTDP1, TAF6/TAFII80 and URI1. Interacts with GTF2B (via C-terminus and preferentially via acetylated form); this interaction prevents binding of GTF2B to GTF2F2. Part of TBP-based Pol II pre-initiation complex (PIC), in which Pol II core assembles with general transcription factors and other specific initiation factors including GTF2E1, GTF2E2, GTF2F1, GTF2F2, TCEA1, ERCC2, ERCC3, GTF2H2, GTF2H3, GTF2H4, GTF2H5, GTF2A1, GTF2A2, GTF2B and TBP; this large multi-subunit PIC complex mediates DNA unwinding and targets Pol II core to the transcription start site where the first phosphodiester bond forms. Phosphorylated on Ser and other residues by TAF1 and casein kinase II-like kinases.

It localises to the nucleus. Its function is as follows. TFIIF is a general transcription initiation factor that binds to RNA polymerase II and helps to recruit it to the initiation complex in collaboration with TFIIB. It promotes transcription elongation. The chain is General transcription factor IIF subunit 1 (GTF2F1) from Bos taurus (Bovine).